An 865-amino-acid polypeptide reads, in one-letter code: Protein translocase subunit SecA (865 aa).

Residues Q85, 103–107 (GEGKT), and D505 each bind ATP. C847, C849, C858, and H859 together coordinate Zn(2+).

Belongs to the SecA family. Monomer and homodimer. Part of the essential Sec protein translocation apparatus which comprises SecA, SecYEG and auxiliary proteins SecDF. Other proteins may also be involved. Requires Zn(2+) as cofactor.

Its subcellular location is the cell membrane. It is found in the cytoplasm. It catalyses the reaction ATP + H2O + cellular proteinSide 1 = ADP + phosphate + cellular proteinSide 2.. Functionally, part of the Sec protein translocase complex. Interacts with the SecYEG preprotein conducting channel. Has a central role in coupling the hydrolysis of ATP to the transfer of proteins into and across the cell membrane, serving as an ATP-driven molecular motor driving the stepwise translocation of polypeptide chains across the membrane. This Lactococcus lactis subsp. lactis (strain IL1403) (Streptococcus lactis) protein is Protein translocase subunit SecA.